The sequence spans 389 residues: MARKDTNKQYSLRKLKTGTASVAVAVAVLGAGFANQTEVKAAEKKVEAKVEVAENNVSSVARREKELYDQIADLTDKNGEYLERIGELEERQKNLEKLEHQSQVAADKHYQEQAKKHQEYKQEQEERQKNQEQLERKYQREVEKRYQEQLQKQQQLETEKQISEASRKSLSRDLEASREAKKKVEADLAALTAEHQKLKEEKQISDASRQGLSRDLEASREAKKKVEADLAALTAEHQKLKEEKQISDASRQGLSRDLEASREAKKKVEADLAEANSKLQALEKLNKELEEGKKLSEKEKAELQARLEAEAKALKEQLAKQAEELAKLKGNQTPNAKVAPQANRSRSAMTQQKRTLPSTGETANPFFTAAAATVMVSAGMLALKRKEEN.

Residues 1 to 41 (MARKDTNKQYSLRKLKTGTASVAVAVAVLGAGFANQTEVKA) form the signal peptide. One copy of the A-1 repeat lies at 89 to 99 (EERQKNLEKLE). The interval 89–135 (EERQKNLEKLEHQSQVAADKHYQEQAKKHQEYKQEQEERQKNQEQLE) is 2 X repeats, type A. 6 stretches are compositionally biased toward basic and acidic residues: residues 93-147 (KNLE…KRYQ), 157-182 (ETEKQISEASRKSLSRDLEASREAKK), 194-204 (EHQKLKEEKQI), 212-224 (LSRDLEASREAKK), 236-246 (EHQKLKEEKQI), and 254-270 (LSRDLEASREAKKKVEA). Disordered regions lie at residues 93–182 (KNLE…EAKK), 194–224 (EHQKLKEEKQISDASRQGLSRDLEASREAKK), and 236–271 (EHQKLKEEKQISDASRQGLSRDLEASREAKKKVEAD). The stretch at 125–135 (EERQKNQEQLE) is one A-2 repeat. C repeat units lie at residues 154 to 188 (QQLETEKQISEASRKSLSRDLEASREAKKKVEADL), 196 to 230 (QKLKEEKQISDASRQGLSRDLEASREAKKKVEADL), and 238 to 272 (QKLKEEKQISDASRQGLSRDLEASREAKKKVEADL). D repeat units follow at residues 305 to 310 (ARLEAE), 311 to 316 (AKALKE), 319 to 324 (AKQAEE), and 326 to 331 (AKLKGN). The tract at residues 326 to 362 (AKLKGNQTPNAKVAPQANRSRSAMTQQKRTLPSTGET) is disordered. The span at 342–362 (ANRSRSAMTQQKRTLPSTGET) shows a compositional bias: polar residues. Residues 356–360 (LPSTG) carry the LPXTG sorting signal motif. Thr359 bears the Pentaglycyl murein peptidoglycan amidated threonine mark. Positions 360 to 389 (GETANPFFTAAAATVMVSAGMLALKRKEEN) are cleaved as a propeptide — removed by sortase.

Belongs to the M protein family. In terms of assembly, homodimer.

It is found in the secreted. Its subcellular location is the cell wall. This protein is one of the different antigenic serotypes of protein M. Protein M is closely associated with virulence of the bacterium and can render the organism resistant to phagocytosis. The chain is M protein, serotype 49 (emm49) from Streptococcus pyogenes serotype M49.